A 1479-amino-acid chain; its full sequence is Type VII secretion system protein EssC (1479 aa).

Residues 1-229 (MHKLIIKYNK…RPPQPIQKNN (229 aa)) are Cytoplasmic-facing. A helical transmembrane segment spans residues 230 to 252 (TVIWRSIIPPLVMIALTVVIFLV). Residues 253–256 (RPIG) lie on the Extracellular side of the membrane. A helical transmembrane segment spans residues 257–279 (IYILMMIGMSSVTIVFGITTYFS). Topologically, residues 280-1479 (EKKKYNKDVE…QAYQKIRWFK (1200 aa)) are cytoplasmic. FtsK domains follow at residues 652 to 846 (DDIL…QDSN) and 997 to 1183 (QGPM…SEVS). ATP contacts are provided by residues 672–679 (GTTGSGKS) and 1014–1021 (GSPGYGRT).

Belongs to the EssC family. As to quaternary structure, homooligomer. Interacts with EsaE.

The protein resides in the cell membrane. Its function is as follows. Component of the type VII secretion system (Ess). Required for the secretion of substrates including EsxA and EsxB. However, unable to support secretion of the substrate protein EsxC. This is Type VII secretion system protein EssC from Staphylococcus aureus (strain MSSA476).